The sequence spans 332 residues: Ketol-acid reductoisomerase (NADP(+)) 1 (332 aa).

A KARI N-terminal Rossmann domain is found at 2 to 182 (AELFYDADAD…GGTRAGVIKT (181 aa)). Residues 25 to 28 (YGSQ), serine 51, serine 53, and 83 to 86 (DPIQ) contribute to the NADP(+) site. The active site involves histidine 108. Position 134 (glycine 134) interacts with NADP(+). The KARI C-terminal knotted domain maps to 183–328 (TFTEETETDL…KELRKLMSWV (146 aa)). Positions 191, 195, 227, and 231 each coordinate Mg(2+). Serine 252 lines the substrate pocket.

This sequence belongs to the ketol-acid reductoisomerase family. It depends on Mg(2+) as a cofactor.

The catalysed reaction is (2R)-2,3-dihydroxy-3-methylbutanoate + NADP(+) = (2S)-2-acetolactate + NADPH + H(+). It carries out the reaction (2R,3R)-2,3-dihydroxy-3-methylpentanoate + NADP(+) = (S)-2-ethyl-2-hydroxy-3-oxobutanoate + NADPH + H(+). It participates in amino-acid biosynthesis; L-isoleucine biosynthesis; L-isoleucine from 2-oxobutanoate: step 2/4. It functions in the pathway amino-acid biosynthesis; L-valine biosynthesis; L-valine from pyruvate: step 2/4. Functionally, involved in the biosynthesis of branched-chain amino acids (BCAA). Catalyzes an alkyl-migration followed by a ketol-acid reduction of (S)-2-acetolactate (S2AL) to yield (R)-2,3-dihydroxy-isovalerate. In the isomerase reaction, S2AL is rearranged via a Mg-dependent methyl migration to produce 3-hydroxy-3-methyl-2-ketobutyrate (HMKB). In the reductase reaction, this 2-ketoacid undergoes a metal-dependent reduction by NADPH to yield (R)-2,3-dihydroxy-isovalerate. The polypeptide is Ketol-acid reductoisomerase (NADP(+)) 1 (Streptomyces coelicolor (strain ATCC BAA-471 / A3(2) / M145)).